The chain runs to 252 residues: Thiazole synthase (252 aa).

Lys-98 functions as the Schiff-base intermediate with DXP in the catalytic mechanism. 1-deoxy-D-xylulose 5-phosphate contacts are provided by residues Gly-159, 185–186 (AG), and 207–208 (AS).

It belongs to the ThiG family. Homotetramer. Forms heterodimers with either ThiH or ThiS.

The protein resides in the cytoplasm. The catalysed reaction is [ThiS sulfur-carrier protein]-C-terminal-Gly-aminoethanethioate + 2-iminoacetate + 1-deoxy-D-xylulose 5-phosphate = [ThiS sulfur-carrier protein]-C-terminal Gly-Gly + 2-[(2R,5Z)-2-carboxy-4-methylthiazol-5(2H)-ylidene]ethyl phosphate + 2 H2O + H(+). Its pathway is cofactor biosynthesis; thiamine diphosphate biosynthesis. In terms of biological role, catalyzes the rearrangement of 1-deoxy-D-xylulose 5-phosphate (DXP) to produce the thiazole phosphate moiety of thiamine. Sulfur is provided by the thiocarboxylate moiety of the carrier protein ThiS. In vitro, sulfur can be provided by H(2)S. This Mycobacterium tuberculosis (strain ATCC 25177 / H37Ra) protein is Thiazole synthase.